A 580-amino-acid polypeptide reads, in one-letter code: Probable alpha-1,3-mannosyltransferase MNT4 (580 aa).

Over 1-10 (MVLRIRRIKK) the chain is Cytoplasmic. Residues 11 to 29 (LAPLIFTSLLSLIVLFRVY) form a helical; Signal-anchor for type II membrane protein membrane-spanning segment. Residues 30 to 580 (RQYPFSDHFE…KVVELWNKVV (551 aa)) lie on the Lumenal side of the membrane. N-linked (GlcNAc...) asparagine glycosylation is found at asparagine 132, asparagine 167, asparagine 223, and asparagine 349.

It belongs to the MNN1/MNT family.

It is found in the membrane. This is Probable alpha-1,3-mannosyltransferase MNT4 (MNT4) from Saccharomyces cerevisiae (strain ATCC 204508 / S288c) (Baker's yeast).